Reading from the N-terminus, the 271-residue chain is Phosphoribosylformylglycinamidine synthase subunit PurQ (271 aa).

Residues 7–253 (KVAVLRMEGT…FGYQVGRREG (247 aa)) enclose the Glutamine amidotransferase type-1 domain. The active-site Nucleophile is the Cys-104. Residues His-238 and Glu-240 contribute to the active site.

In terms of assembly, part of the FGAM synthase complex composed of 1 PurL, 1 PurQ and 2 PurS subunits.

The protein resides in the cytoplasm. The catalysed reaction is N(2)-formyl-N(1)-(5-phospho-beta-D-ribosyl)glycinamide + L-glutamine + ATP + H2O = 2-formamido-N(1)-(5-O-phospho-beta-D-ribosyl)acetamidine + L-glutamate + ADP + phosphate + H(+). The enzyme catalyses L-glutamine + H2O = L-glutamate + NH4(+). It participates in purine metabolism; IMP biosynthesis via de novo pathway; 5-amino-1-(5-phospho-D-ribosyl)imidazole from N(2)-formyl-N(1)-(5-phospho-D-ribosyl)glycinamide: step 1/2. Its function is as follows. Part of the phosphoribosylformylglycinamidine synthase complex involved in the purines biosynthetic pathway. Catalyzes the ATP-dependent conversion of formylglycinamide ribonucleotide (FGAR) and glutamine to yield formylglycinamidine ribonucleotide (FGAM) and glutamate. The FGAM synthase complex is composed of three subunits. PurQ produces an ammonia molecule by converting glutamine to glutamate. PurL transfers the ammonia molecule to FGAR to form FGAM in an ATP-dependent manner. PurS interacts with PurQ and PurL and is thought to assist in the transfer of the ammonia molecule from PurQ to PurL. This Archaeoglobus fulgidus (strain ATCC 49558 / DSM 4304 / JCM 9628 / NBRC 100126 / VC-16) protein is Phosphoribosylformylglycinamidine synthase subunit PurQ.